Here is a 231-residue protein sequence, read N- to C-terminus: Cytochrome c oxidase assembly factor 7 (231 aa).

The residue at position 2 (A2) is an N-acetylalanine. Sel1-like repeat units follow at residues 34-66 (PDGCYRLVDYLEGIRKNFDEAAKVLKFNCEENQ), 68-104 (SDSCYKLGAYYVTGKGGLTQDLKAAARCFLMACEKPG), 108-146 (IAACHNVGLLAHDGQVNEDGQPDLGKARDYYTRACDGGY), 147-183 (TSSCFNLSAMFLQGAPGFPKDMDLACKYSMKACDLGH), and 184-219 (IWACANASRMYKLGDGVDKDEAKAEVLKNRAQQLHK).

This sequence belongs to the hcp beta-lactamase family. In terms of assembly, interacts with CHCHD4/MIA40 through transient intermolecular disulfide bonds.

It is found in the mitochondrion intermembrane space. Its function is as follows. Required for assembly of mitochondrial respiratory chain complex I and complex IV. The polypeptide is Cytochrome c oxidase assembly factor 7 (COA7) (Homo sapiens (Human)).